The following is a 121-amino-acid chain: Flagellar protein FliT (121 aa).

Positions 1–50 are required for homodimerization; sequence MNNAPHLYFAWQQLVEKSQLMLRLATEEQWDELIASEMAYVNAVQEIAHL. The interval 60-98 is fliD binding; the sequence is MQEQLRPMLHLILDNESKVKQLLQIRMDELAKLVGQSSV.

The protein belongs to the FliT family. As to quaternary structure, homodimer. Interacts with FliD and FlhC.

It is found in the cytoplasm. The protein localises to the cytosol. In terms of biological role, dual-function protein that regulates the transcription of class 2 flagellar operons and that also acts as an export chaperone for the filament-capping protein FliD. As a transcriptional regulator, acts as an anti-FlhDC factor; it directly binds FlhC, thus inhibiting the binding of the FlhC/FlhD complex to class 2 promoters, resulting in decreased expression of class 2 flagellar operons. As a chaperone, effects FliD transition to the membrane by preventing its premature polymerization, and by directing it to the export apparatus. This Escherichia coli O17:K52:H18 (strain UMN026 / ExPEC) protein is Flagellar protein FliT.